The primary structure comprises 463 residues: Ribosomal protein uS12 methylthiotransferase RimO (463 aa).

Residues Pro15–Pro130 form the MTTase N-terminal domain. Positions 24, 60, 89, 161, 165, and 168 each coordinate [4Fe-4S] cluster. The Radical SAM core domain maps to Leu147–Lys392. The region spanning Ala395–Val463 is the TRAM domain.

The protein belongs to the methylthiotransferase family. RimO subfamily. It depends on [4Fe-4S] cluster as a cofactor.

Its subcellular location is the cytoplasm. The enzyme catalyses L-aspartate(89)-[ribosomal protein uS12]-hydrogen + (sulfur carrier)-SH + AH2 + 2 S-adenosyl-L-methionine = 3-methylsulfanyl-L-aspartate(89)-[ribosomal protein uS12]-hydrogen + (sulfur carrier)-H + 5'-deoxyadenosine + L-methionine + A + S-adenosyl-L-homocysteine + 2 H(+). Its function is as follows. Catalyzes the methylthiolation of an aspartic acid residue of ribosomal protein uS12. The protein is Ribosomal protein uS12 methylthiotransferase RimO of Paraburkholderia phymatum (strain DSM 17167 / CIP 108236 / LMG 21445 / STM815) (Burkholderia phymatum).